Here is a 333-residue protein sequence, read N- to C-terminus: cGAMP-activated phospholipase (333 aa).

A PNPLA domain is found at 10-191 (LALSGGGYRG…VGNAPGLFGL (182 aa)). Residues 14–19 (GGGYRG) carry the GXGXXG motif. A GXSXG motif is present at residues 46 to 50 (GTSAG). The Nucleophile role is filled by Ser-48. The Proton acceptor role is filled by Asp-178. The DGA/G signature appears at 178 to 180 (DGG).

It belongs to the patatin family.

It catalyses the reaction a 1,2-diacyl-sn-glycero-3-phosphocholine + H2O = a 2-acyl-sn-glycero-3-phosphocholine + a fatty acid + H(+). The enzyme catalyses 1,2-di-(9Z-octadecenoyl)-sn-glycero-3-phosphoethanolamine + 2 H2O = sn-glycero-3-phosphoethanolamine + 2 (9Z)-octadecenoate + 2 H(+). Phospholipase activity is specifically activated upon cGAMP binding, which is produced by the cognate cyclic nucleotide synthase encoded in the same operon. Is not activated by cyclic dinucleotides 2',3'-cGAMP, c-diAMP or 3',3'-c-diGMP. Effector phospholipase of a CBASS antiviral system. CBASS (cyclic oligonucleotide-based antiphage signaling system) provides immunity against bacteriophages. The CD-NTase protein (CdnA) synthesizes cyclic nucleotides in response to infection; these serve as specific second messenger signals. The signals activate a diverse range of effectors, leading to bacterial cell death and thus abortive phage infection. A type II-A(GA) CBASS system. In terms of biological role, phospholipase that is activated upon binding to the cyclic dinucleotide (CDN) second messenger 3',3'-cyclic GMP-AMP (cGAMP). Degrades phospholipids in the cell membrane. Functionally, the capV-cdnA-cap2-cap3 operon provides about 10(4)-fold protection in strain BWHPSA011 against infection by phage PaMx41. In P.aeruginosa strain PAO1 it confers protection against phages PaMx41 and JBD18 but not JBD67 (JBD18 and JBD67 do not replicate in BWHPSA011 / Pa011). When acb2 in JBD67 is deleted this CBASS operon then protects against JDB67 also. This CBASS system limits prophage induction of lysogenized JBD67 as well as viral lytic replication. This chain is cGAMP-activated phospholipase, found in Pseudomonas aeruginosa (strain BWHPSA011 / Pa011).